Consider the following 479-residue polypeptide: Glutamate--tRNA ligase (479 aa).

A 'HIGH' region motif is present at residues Pro-21 to Gly-31. Residues Lys-248–Arg-252 carry the 'KMSKS' region motif. Position 251 (Lys-251) interacts with ATP.

Belongs to the class-I aminoacyl-tRNA synthetase family. Glutamate--tRNA ligase type 1 subfamily. Monomer.

The protein localises to the cytoplasm. The catalysed reaction is tRNA(Glu) + L-glutamate + ATP = L-glutamyl-tRNA(Glu) + AMP + diphosphate. Catalyzes the attachment of glutamate to tRNA(Glu) in a two-step reaction: glutamate is first activated by ATP to form Glu-AMP and then transferred to the acceptor end of tRNA(Glu). This chain is Glutamate--tRNA ligase, found in Actinobacillus pleuropneumoniae serotype 7 (strain AP76).